The sequence spans 637 residues: Phosphomethylpyrimidine synthase (637 aa).

Substrate contacts are provided by residues Asn-242, Met-271, Tyr-300, His-336, 356-358 (SRG), 397-400 (DGLR), and Glu-436. His-440 lines the Zn(2+) pocket. Tyr-463 lines the substrate pocket. Residue His-504 coordinates Zn(2+). [4Fe-4S] cluster is bound by residues Cys-584, Cys-587, and Cys-592.

This sequence belongs to the ThiC family. Homodimer. Requires [4Fe-4S] cluster as cofactor.

It catalyses the reaction 5-amino-1-(5-phospho-beta-D-ribosyl)imidazole + S-adenosyl-L-methionine = 4-amino-2-methyl-5-(phosphooxymethyl)pyrimidine + CO + 5'-deoxyadenosine + formate + L-methionine + 3 H(+). It participates in cofactor biosynthesis; thiamine diphosphate biosynthesis. Catalyzes the synthesis of the hydroxymethylpyrimidine phosphate (HMP-P) moiety of thiamine from aminoimidazole ribotide (AIR) in a radical S-adenosyl-L-methionine (SAM)-dependent reaction. This chain is Phosphomethylpyrimidine synthase, found in Janthinobacterium sp. (strain Marseille) (Minibacterium massiliensis).